Here is a 187-residue protein sequence, read N- to C-terminus: POM121 and ZP3 fusion protein (187 aa).

The segment at 166 to 187 (GTPSHSRRQPRVVSQWSTSASL) is disordered. Residues 177-187 (VVSQWSTSASL) are compositionally biased toward polar residues.

In terms of tissue distribution, expressed in spleen, thymus, pancreas, testis, ovary, small intestine, colon and lymphocytes.

This is POM121 and ZP3 fusion protein (POMZP3) from Homo sapiens (Human).